Consider the following 376-residue polypeptide: N-acetyldiaminopimelate deacetylase (376 aa).

Residue aspartate 69 is part of the active site. Glutamate 128 functions as the Proton acceptor in the catalytic mechanism.

It belongs to the peptidase M20A family. N-acetyldiaminopimelate deacetylase subfamily.

The enzyme catalyses N-acetyl-(2S,6S)-2,6-diaminopimelate + H2O = (2S,6S)-2,6-diaminopimelate + acetate. The protein operates within amino-acid biosynthesis; L-lysine biosynthesis via DAP pathway; LL-2,6-diaminopimelate from (S)-tetrahydrodipicolinate (acetylase route): step 3/3. Functionally, catalyzes the conversion of N-acetyl-diaminopimelate to diaminopimelate and acetate. In Streptococcus pneumoniae (strain Hungary19A-6), this protein is N-acetyldiaminopimelate deacetylase.